Consider the following 486-residue polypeptide: Siroheme synthase (486 aa).

Positions 1–203 (MNYFPIFANL…RQNTLAEREL (203 aa)) are precorrin-2 dehydrogenase /sirohydrochlorin ferrochelatase. Residues 22–23 (AV) and 43–44 (KH) each bind NAD(+). Position 128 is a phosphoserine (Ser128). Residues 217–486 (GSVSLVGAGP…LGTGQEQQAA (270 aa)) form a uroporphyrinogen-III C-methyltransferase region. Residue Pro226 participates in S-adenosyl-L-methionine binding. The active-site Proton acceptor is Asp249. Lys271 acts as the Proton donor in catalysis. Residues 302 to 304 (GGD), Val307, 332 to 333 (TA), Met384, and Gly413 each bind S-adenosyl-L-methionine.

It in the N-terminal section; belongs to the precorrin-2 dehydrogenase / sirohydrochlorin ferrochelatase family. This sequence in the C-terminal section; belongs to the precorrin methyltransferase family.

The catalysed reaction is uroporphyrinogen III + 2 S-adenosyl-L-methionine = precorrin-2 + 2 S-adenosyl-L-homocysteine + H(+). It catalyses the reaction precorrin-2 + NAD(+) = sirohydrochlorin + NADH + 2 H(+). The enzyme catalyses siroheme + 2 H(+) = sirohydrochlorin + Fe(2+). It participates in cofactor biosynthesis; adenosylcobalamin biosynthesis; precorrin-2 from uroporphyrinogen III: step 1/1. It functions in the pathway cofactor biosynthesis; adenosylcobalamin biosynthesis; sirohydrochlorin from precorrin-2: step 1/1. Its pathway is porphyrin-containing compound metabolism; siroheme biosynthesis; precorrin-2 from uroporphyrinogen III: step 1/1. The protein operates within porphyrin-containing compound metabolism; siroheme biosynthesis; siroheme from sirohydrochlorin: step 1/1. It participates in porphyrin-containing compound metabolism; siroheme biosynthesis; sirohydrochlorin from precorrin-2: step 1/1. In terms of biological role, multifunctional enzyme that catalyzes the SAM-dependent methylations of uroporphyrinogen III at position C-2 and C-7 to form precorrin-2 via precorrin-1. Then it catalyzes the NAD-dependent ring dehydrogenation of precorrin-2 to yield sirohydrochlorin. Finally, it catalyzes the ferrochelation of sirohydrochlorin to yield siroheme. The protein is Siroheme synthase of Neisseria meningitidis serogroup A / serotype 4A (strain DSM 15465 / Z2491).